The primary structure comprises 160 residues: Phosphoribosyl-ATP pyrophosphatase (160 aa).

It belongs to the PRA-PH family.

It is found in the cytoplasm. It catalyses the reaction 1-(5-phospho-beta-D-ribosyl)-ATP + H2O = 1-(5-phospho-beta-D-ribosyl)-5'-AMP + diphosphate + H(+). The protein operates within amino-acid biosynthesis; L-histidine biosynthesis; L-histidine from 5-phospho-alpha-D-ribose 1-diphosphate: step 2/9. This is Phosphoribosyl-ATP pyrophosphatase from Granulibacter bethesdensis (strain ATCC BAA-1260 / CGDNIH1).